We begin with the raw amino-acid sequence, 252 residues long: tRNA (guanine-N(7)-)-methyltransferase (252 aa).

S-adenosyl-L-methionine is bound by residues E51, D76, N103, and D125. The active site involves D125. Residues K129, D159, and 199-202 contribute to the substrate site; that span reads TYYE.

It belongs to the class I-like SAM-binding methyltransferase superfamily. TrmB family.

It catalyses the reaction guanosine(46) in tRNA + S-adenosyl-L-methionine = N(7)-methylguanosine(46) in tRNA + S-adenosyl-L-homocysteine. The protein operates within tRNA modification; N(7)-methylguanine-tRNA biosynthesis. Catalyzes the formation of N(7)-methylguanine at position 46 (m7G46) in tRNA. In Bacteroides fragilis (strain YCH46), this protein is tRNA (guanine-N(7)-)-methyltransferase.